Here is an 85-residue protein sequence, read N- to C-terminus: Neurotoxin beta-KTx 17 (85 aa).

Positions 1–20 (MKQYIFFLALIVLVSTFAEA) are cleaved as a signal peptide. Positions 21 to 37 (GKKTEILDKVKKVFSKG) are excised as a propeptide. Residues 49-85 (ELGCPFIEKWCEDHCESKKQVGKCENFDCSCVKLGGK) enclose the BetaSPN-type CS-alpha/beta domain. Cystine bridges form between Cys-52/Cys-72, Cys-59/Cys-77, and Cys-63/Cys-79.

It belongs to the long chain scorpion toxin family. Class 2 subfamily. Expressed by the venom gland.

The protein localises to the secreted. Functionally, has a very weak effect to block voltage-gated potassium channel Kv1.1/KCNA1. The polypeptide is Neurotoxin beta-KTx 17 (Lychas mucronatus (Chinese swimming scorpion)).